Consider the following 418-residue polypeptide: Sprouty-related, EVH1 domain-containing protein 2 (418 aa).

The region spanning 5–122 (THPDDDSYIV…RGVRKAIEDL (118 aa)) is the WH1 domain. The tract at residues 127–171 (TTSSSTIHNEAELGDDDVFTTATDSSSNSSQKREQPTRTISSPTS) is disordered. A compositionally biased stretch (polar residues) spans 146 to 156 (TTATDSSSNSS). Positions 201-257 (PYRQVSFPDDDEEIVRINPREKIWMTGYEDYRHAPVRGKYPDPSEDADSSYVRFAKG) constitute a KBD domain. Ser206 carries the post-translational modification Phosphoserine. 2 positions are modified to phosphotyrosine: Tyr228 and Tyr231. Positions 275–302 (GLGEDPKGRGGSVIKTQPSRGKSRRRKE) are disordered. The SPR domain occupies 308–416 (RCVYCRDMFN…CRCCGGKHKA (109 aa)).

Homodimer and heterodimer. Able to interact with SPRED1 to form heterodimers. Interacts with RAS. May interact with ZDHHC13 (via ANK repeats) and ZDHHC17 (via ANK repeats). Interacts with TESK1. Interacts with NF1. Phosphorylated on serine and threonine residues. Phosphorylated on tyrosine. Phosphorylation of Tyr-228 and Tyr-231 are required for ubiquitination. Post-translationally, ubiquitinated; leading to degradation by the proteasome. As to expression, expressed in liver, skin, small intestine, salivary gland and prostate.

The protein resides in the cell membrane. Its subcellular location is the cytoplasmic vesicle. It localises to the secretory vesicle membrane. The protein localises to the cytoplasm. Its function is as follows. Negatively regulates Ras signaling pathways and downstream activation of MAP kinases. Recruits and translocates NF1 to the cell membrane, thereby enabling NF1-dependent hydrolysis of active GTP-bound Ras to inactive GDP-bound Ras. Inhibits fibroblast growth factor (FGF)-induced retinal lens fiber differentiation, probably by inhibiting FGF-mediated phosphorylation of ERK1/2. Inhibits TGFB-induced epithelial-to-mesenchymal transition in lens epithelial cells. The chain is Sprouty-related, EVH1 domain-containing protein 2 (SPRED2) from Homo sapiens (Human).